The primary structure comprises 110 residues: uncharacterized protein (110 aa).

This is an uncharacterized protein from Microplitis demolitor bracovirus (isolate Webb) (MdBV).